A 548-amino-acid polypeptide reads, in one-letter code: Spindle pole body-associated protein cut12 (548 aa).

Positions 122-325 (FKSPLLQSTP…GQQSKYKGKE (204 aa)) are interaction with plo1. The tract at residues 123–182 (KSPLLQSTPKPNINNPDNENKSKHDEFDNRYNININESYKNETKSNQRLGEDVPSKKKYP) is disordered. Over residues 126–139 (LLQSTPKPNINNPD) the composition is skewed to polar residues. Basic and acidic residues-rich tracts occupy residues 140–151 (NENKSKHDEFDN) and 161–182 (YKNE…KKYP). Residues 261–312 (KQKFSMLDSAHSDLELELTSIRERLESLILEKQEEINFWKQRCRALETEKIH) adopt a coiled-coil conformation. Residues 344-356 (PITTKVVSRPSQS) are compositionally biased toward polar residues. Disordered regions lie at residues 344-369 (PITT…PSKN) and 510-548 (SRVD…QLNS). Residues 522–548 (RTANAKKRLEERRRRRKLKLQELQLNS) adopt a coiled-coil conformation.

As to quaternary structure, self-associates. Interacts with plo1.

It localises to the cytoplasm. The protein resides in the cytoskeleton. The protein localises to the microtubule organizing center. Its subcellular location is the spindle pole body. Its function is as follows. Required for bipolar spindle formation. May act as a regulator of the p34cdc2/cyclin B kinase. Required for full activation of the plo1 kinase. However, in cut12.1 cells at restrictive temperature the H1 kinase does rise concomitant with entry into mitosis, indicating that cut12 is not required for activation of p34cdc2/cyclin B. The cut12.s11 allele may promote cdc2-independent phosphorylation of SPB proteins thereby overcoming the requirement for cdc25 in cell cycle progression. The chain is Spindle pole body-associated protein cut12 (cut12) from Schizosaccharomyces pombe (strain 972 / ATCC 24843) (Fission yeast).